The sequence spans 118 residues: Telomere bouquet protein 2 (118 aa).

As to quaternary structure, interacts with bqt1. The bqt1-bqt2-sad1 complex binds rap1.

Its subcellular location is the cytoplasm. The protein resides in the nucleus. It is found in the cytoskeleton. The protein localises to the microtubule organizing center. It localises to the spindle pole body. Its subcellular location is the chromosome. The protein resides in the telomere. In terms of biological role, involved in chromosome segregation. During meiotic prophase, connects telomeres to the spindle pole body by forming a bridge between the telomere protein rap1 and the spindle pole body protein sad1. In Schizosaccharomyces pombe (strain 972 / ATCC 24843) (Fission yeast), this protein is Telomere bouquet protein 2 (bqt2).